The following is a 161-amino-acid chain: Cytochrome b6-f complex subunit 4 (161 aa).

3 helical membrane passes run 37-57 (LLYI…GLAV), 96-116 (LLGV…PFIE), and 130-150 (AMTV…GAAF).

It belongs to the cytochrome b family. PetD subfamily. As to quaternary structure, the 4 large subunits of the cytochrome b6-f complex are cytochrome b6, subunit IV (17 kDa polypeptide, PetD), cytochrome f and the Rieske protein, while the 4 small subunits are PetG, PetL, PetM and PetN. The complex functions as a dimer.

It localises to the cellular thylakoid membrane. Functionally, component of the cytochrome b6-f complex, which mediates electron transfer between photosystem II (PSII) and photosystem I (PSI), cyclic electron flow around PSI, and state transitions. This Synechococcus elongatus protein is Cytochrome b6-f complex subunit 4.